The chain runs to 139 residues: Large ribosomal subunit protein uL16 (139 aa).

Belongs to the universal ribosomal protein uL16 family. As to quaternary structure, part of the 50S ribosomal subunit.

Its function is as follows. Binds 23S rRNA and is also seen to make contacts with the A and possibly P site tRNAs. This Gloeothece citriformis (strain PCC 7424) (Cyanothece sp. (strain PCC 7424)) protein is Large ribosomal subunit protein uL16.